The following is a 203-amino-acid chain: Urease accessory protein UreG (203 aa).

14–21 (GPVGAGKT) is a binding site for GTP.

Belongs to the SIMIBI class G3E GTPase family. UreG subfamily. As to quaternary structure, homodimer. UreD, UreF and UreG form a complex that acts as a GTP-hydrolysis-dependent molecular chaperone, activating the urease apoprotein by helping to assemble the nickel containing metallocenter of UreC. The UreE protein probably delivers the nickel.

Its subcellular location is the cytoplasm. In terms of biological role, facilitates the functional incorporation of the urease nickel metallocenter. This process requires GTP hydrolysis, probably effectuated by UreG. The protein is Urease accessory protein UreG of Jannaschia sp. (strain CCS1).